Here is a 364-residue protein sequence, read N- to C-terminus: tRNA 2-selenouridine synthase (364 aa).

The 124-residue stretch at 14-137 (LIADTPIIDV…LRQAAIQATI (124 aa)) folds into the Rhodanese domain. The active-site S-selanylcysteine intermediate is Cys-97.

This sequence belongs to the SelU family. In terms of assembly, monomer.

The catalysed reaction is 5-methylaminomethyl-2-thiouridine(34) in tRNA + selenophosphate + (2E)-geranyl diphosphate + H2O + H(+) = 5-methylaminomethyl-2-selenouridine(34) in tRNA + (2E)-thiogeraniol + phosphate + diphosphate. It catalyses the reaction 5-methylaminomethyl-2-thiouridine(34) in tRNA + (2E)-geranyl diphosphate = 5-methylaminomethyl-S-(2E)-geranyl-thiouridine(34) in tRNA + diphosphate. The enzyme catalyses 5-methylaminomethyl-S-(2E)-geranyl-thiouridine(34) in tRNA + selenophosphate + H(+) = 5-methylaminomethyl-2-(Se-phospho)selenouridine(34) in tRNA + (2E)-thiogeraniol. It carries out the reaction 5-methylaminomethyl-2-(Se-phospho)selenouridine(34) in tRNA + H2O = 5-methylaminomethyl-2-selenouridine(34) in tRNA + phosphate. In terms of biological role, involved in the post-transcriptional modification of the uridine at the wobble position (U34) of tRNA(Lys), tRNA(Glu) and tRNA(Gln). Catalyzes the conversion of 2-thiouridine (S2U-RNA) to 2-selenouridine (Se2U-RNA). Acts in a two-step process involving geranylation of 2-thiouridine (S2U) to S-geranyl-2-thiouridine (geS2U) and subsequent selenation of the latter derivative to 2-selenouridine (Se2U) in the tRNA chain. This Shigella sonnei (strain Ss046) protein is tRNA 2-selenouridine synthase.